A 275-amino-acid chain; its full sequence is tRNA pseudouridine synthase A (275 aa).

D56 serves as the catalytic Nucleophile. Y114 lines the substrate pocket.

Belongs to the tRNA pseudouridine synthase TruA family. Homodimer.

It carries out the reaction uridine(38/39/40) in tRNA = pseudouridine(38/39/40) in tRNA. Formation of pseudouridine at positions 38, 39 and 40 in the anticodon stem and loop of transfer RNAs. The sequence is that of tRNA pseudouridine synthase A from Polynucleobacter asymbioticus (strain DSM 18221 / CIP 109841 / QLW-P1DMWA-1) (Polynucleobacter necessarius subsp. asymbioticus).